Consider the following 334-residue polypeptide: Ornithine carbamoyltransferase (334 aa).

Residues 57–60 (STRT), Gln84, Arg108, and 135–138 (HPTQ) each bind carbamoyl phosphate. L-ornithine-binding positions include Asn168, Asp232, and 236 to 237 (SM). Carbamoyl phosphate-binding positions include 274–275 (CL) and Arg321.

It belongs to the aspartate/ornithine carbamoyltransferase superfamily. OTCase family.

The protein resides in the cytoplasm. It catalyses the reaction carbamoyl phosphate + L-ornithine = L-citrulline + phosphate + H(+). It functions in the pathway amino-acid biosynthesis; L-arginine biosynthesis; L-arginine from L-ornithine and carbamoyl phosphate: step 1/3. Reversibly catalyzes the transfer of the carbamoyl group from carbamoyl phosphate (CP) to the N(epsilon) atom of ornithine (ORN) to produce L-citrulline. The chain is Ornithine carbamoyltransferase from Actinobacillus pleuropneumoniae serotype 5b (strain L20).